The sequence spans 173 residues: Shikimate kinase 1 (173 aa).

14-19 lines the ATP pocket; sequence GAGKST. S18 contributes to the Mg(2+) binding site. Residues D36, R60, and G82 each contribute to the substrate site. R120 provides a ligand contact to ATP. R140 lines the substrate pocket. Q157 is an ATP binding site.

This sequence belongs to the shikimate kinase family. In terms of assembly, monomer. Requires Mg(2+) as cofactor.

It is found in the cytoplasm. The enzyme catalyses shikimate + ATP = 3-phosphoshikimate + ADP + H(+). The protein operates within metabolic intermediate biosynthesis; chorismate biosynthesis; chorismate from D-erythrose 4-phosphate and phosphoenolpyruvate: step 5/7. Catalyzes the specific phosphorylation of the 3-hydroxyl group of shikimic acid using ATP as a cosubstrate. The sequence is that of Shikimate kinase 1 from Serratia proteamaculans (strain 568).